The sequence spans 117 residues: G antigen 5 (117 aa).

The tract at residues Met-1–Cys-117 is disordered. Composition is skewed to acidic residues over residues Phe-32–Glu-45 and Glu-87–Glu-96. Residues Glu-103 to Cys-117 are compositionally biased toward basic and acidic residues.

The protein belongs to the GAGE family. Expressed in a variety of tumor tissues but not in normal tissues, except testis.

The chain is G antigen 5 (GAGE5) from Homo sapiens (Human).